A 308-amino-acid chain; its full sequence is Ribosomal RNA large subunit methyltransferase F (308 aa).

It belongs to the methyltransferase superfamily. METTL16/RlmF family.

The protein localises to the cytoplasm. The enzyme catalyses adenosine(1618) in 23S rRNA + S-adenosyl-L-methionine = N(6)-methyladenosine(1618) in 23S rRNA + S-adenosyl-L-homocysteine + H(+). Specifically methylates the adenine in position 1618 of 23S rRNA. The protein is Ribosomal RNA large subunit methyltransferase F of Shigella dysenteriae serotype 1 (strain Sd197).